We begin with the raw amino-acid sequence, 62 residues long: U10-hottentoxin-Hj2a (62 aa).

A signal peptide spans methionine 1–glycine 22. Intrachain disulfides connect cysteine 28–cysteine 46, cysteine 33–cysteine 59, and cysteine 37–cysteine 61.

The protein belongs to the short scorpion toxin superfamily. Potassium channel inhibitor family. Alpha-KTx 23 subfamily. In terms of tissue distribution, expressed by the venom gland.

The protein resides in the secreted. Functionally, may block potassium channels. The polypeptide is U10-hottentoxin-Hj2a (Hottentotta judaicus (Black scorpion)).